The sequence spans 388 residues: Formate-dependent phosphoribosylglycinamide formyltransferase (388 aa).

N(1)-(5-phospho-beta-D-ribosyl)glycinamide-binding positions include 21–22 (EL) and glutamate 81. Residues arginine 113, lysine 154, 159–164 (SSGHGQ), 193–196 (EEFI), and glutamate 201 contribute to the ATP site. One can recognise an ATP-grasp domain in the interval 118-306 (KFAAEELGLK…EFALHVRAVL (189 aa)). Mg(2+) is bound by residues glutamate 265 and glutamate 277. N(1)-(5-phospho-beta-D-ribosyl)glycinamide is bound by residues aspartate 284, lysine 352, and 359–360 (RR).

The protein belongs to the PurK/PurT family. In terms of assembly, homodimer.

The enzyme catalyses N(1)-(5-phospho-beta-D-ribosyl)glycinamide + formate + ATP = N(2)-formyl-N(1)-(5-phospho-beta-D-ribosyl)glycinamide + ADP + phosphate + H(+). It functions in the pathway purine metabolism; IMP biosynthesis via de novo pathway; N(2)-formyl-N(1)-(5-phospho-D-ribosyl)glycinamide from N(1)-(5-phospho-D-ribosyl)glycinamide (formate route): step 1/1. In terms of biological role, involved in the de novo purine biosynthesis. Catalyzes the transfer of formate to 5-phospho-ribosyl-glycinamide (GAR), producing 5-phospho-ribosyl-N-formylglycinamide (FGAR). Formate is provided by PurU via hydrolysis of 10-formyl-tetrahydrofolate. In Nitratiruptor sp. (strain SB155-2), this protein is Formate-dependent phosphoribosylglycinamide formyltransferase.